A 213-amino-acid polypeptide reads, in one-letter code: MTELPERSAATTGGAKTARDVSSLIAELGLTAEDSIEPTALVPPERLREVALALRDRGFMLMDTVGVDYGAFPERIPARFCVLHNVYHIKDRCRLFLRVWLEEGQALDSLYPVWRAANYLEREVYDLFGIEFVGHPDLRKILTPDDLEGHPLRKDFPLGESPTLFREGRFIDPPAFRAGLSGQNAGLTGWRGEFRRGERGDRVPPVLPEGGPQ.

Belongs to the complex I 30 kDa subunit family. In terms of assembly, NDH-1 is composed of 15 different subunits. Subunits NuoB, C, D, E, F, and G constitute the peripheral sector of the complex.

The protein resides in the cell membrane. It catalyses the reaction a quinone + NADH + 5 H(+)(in) = a quinol + NAD(+) + 4 H(+)(out). In terms of biological role, NDH-1 shuttles electrons from NADH, via FMN and iron-sulfur (Fe-S) centers, to quinones in the respiratory chain. The immediate electron acceptor for the enzyme in this species is believed to be a menaquinone. Couples the redox reaction to proton translocation (for every two electrons transferred, four hydrogen ions are translocated across the cytoplasmic membrane), and thus conserves the redox energy in a proton gradient. The protein is NADH-quinone oxidoreductase subunit C of Deinococcus geothermalis (strain DSM 11300 / CIP 105573 / AG-3a).